We begin with the raw amino-acid sequence, 442 residues long: Putative zinc metalloprotease PM1991 (442 aa).

His21 lines the Zn(2+) pocket. Residue Glu22 is part of the active site. His25 lines the Zn(2+) pocket. Residues 97–119 traverse the membrane as a helical segment; it reads AFVIAAGPIANFLFAILAYFTIY. Residues 198-286 form the PDZ domain; that stretch reads DWRFDPEKES…FSFVVLTPEL (89 aa). Helical transmembrane passes span 366 to 388 and 418 to 440; these read IGLIYYLGFMALISVNLGIMNLF and LSYRIGAAILMALMGFALFNDFL.

This sequence belongs to the peptidase M50B family. It depends on Zn(2+) as a cofactor.

It localises to the cell inner membrane. This chain is Putative zinc metalloprotease PM1991, found in Pasteurella multocida (strain Pm70).